Here is a 446-residue protein sequence, read N- to C-terminus: L-2-hydroxyglutarate dehydrogenase, mitochondrial (446 aa).

Residues 1–28 (MKNSSSMLKGVKSFIGSGIYTNKPIYDV) constitute a mitochondrion transit peptide.

The protein belongs to the L2HGDH family. It depends on FAD as a cofactor.

It localises to the mitochondrion. The enzyme catalyses (S)-2-hydroxyglutarate + A = 2-oxoglutarate + AH2. This Dictyostelium discoideum (Social amoeba) protein is L-2-hydroxyglutarate dehydrogenase, mitochondrial (l2hgdh).